A 118-amino-acid polypeptide reads, in one-letter code: uncharacterized protein (118 aa).

The disordered stretch occupies residues 1–49 (MDYVGGSLKLKNVKKKPLKKKKKDSKKLAEKVQEHSSRDKSPLEENGVS). Residues 11–25 (KNVKKKPLKKKKKDS) show a composition bias toward basic residues. Basic and acidic residues predominate over residues 26–43 (KKLAEKVQEHSSRDKSPL).

This is an uncharacterized protein from Schizosaccharomyces pombe (strain 972 / ATCC 24843) (Fission yeast).